The primary structure comprises 405 residues: MARANKVVLAYSGGVDTSVCIPYLKHEWGVEEVITFAADLGQGDELEPIRQKALDAGASQSLVGDLIEPFITEFAFPAIRANALYEGRYPLSTALARPLIARRLVEIAREVGADAVAHGCTGKGNDQVRFDVAIGALAPDLKVLTPAREWGMSREETIAYGERYGLPSPVSKRSPYSIDLNLLGRSIEAGPLEDPDVEPPEEVFAMTCSTEAAPAQPELVSIGFEAGLPVSINGQRLDPVSLIREANRLAGSHGFGRLDMIENRVVGIKSREIYETPGLLLLIQAHQELESLTLAADVLRTKRQLEMQWADLVYQGLWFGPLKDALDGFIERTQLTVNGSVRIKLHRGSATVVGRSSSDSLYEPDMATYGAEDQFDHRAASGFIYVWGLPTRLWAAAKRRRGHHG.

Residues A10–S18 and A38 each bind ATP. An L-citrulline-binding site is contributed by Y89. Position 119 (G119) interacts with ATP. L-aspartate contacts are provided by T121, N125, and D126. N125 lines the L-citrulline pocket. L-citrulline-binding residues include R129, S177, S186, E262, and Y274.

The protein belongs to the argininosuccinate synthase family. Type 1 subfamily. Homotetramer.

The protein resides in the cytoplasm. It carries out the reaction L-citrulline + L-aspartate + ATP = 2-(N(omega)-L-arginino)succinate + AMP + diphosphate + H(+). It participates in amino-acid biosynthesis; L-arginine biosynthesis; L-arginine from L-ornithine and carbamoyl phosphate: step 2/3. The chain is Argininosuccinate synthase from Synechococcus sp. (strain RCC307).